The sequence spans 559 residues: Thermosome subunit alpha (559 aa).

The segment covering 536–552 has biased composition (basic and acidic residues); it reads SGEKKGEKKEGGEEEKS. Positions 536 to 559 are disordered; the sequence is SGEKKGEKKEGGEEEKSSTPSSLE.

It belongs to the TCP-1 chaperonin family. Forms a Heterooligomeric complex of two stacked nine-membered rings; one of alpha and the other of beta subunits.

Molecular chaperone; binds unfolded polypeptides in vitro, and has a weak ATPase activity. In Sulfurisphaera tokodaii (strain DSM 16993 / JCM 10545 / NBRC 100140 / 7) (Sulfolobus tokodaii), this protein is Thermosome subunit alpha (thsA).